The sequence spans 442 residues: Proline--tRNA ligase (442 aa).

This sequence belongs to the class-II aminoacyl-tRNA synthetase family. ProS type 2 subfamily. In terms of assembly, homodimer.

The protein resides in the cytoplasm. The enzyme catalyses tRNA(Pro) + L-proline + ATP = L-prolyl-tRNA(Pro) + AMP + diphosphate. In terms of biological role, catalyzes the attachment of proline to tRNA(Pro) in a two-step reaction: proline is first activated by ATP to form Pro-AMP and then transferred to the acceptor end of tRNA(Pro). The sequence is that of Proline--tRNA ligase from Sinorhizobium medicae (strain WSM419) (Ensifer medicae).